Consider the following 488-residue polypeptide: Ribosomal RNA small subunit methyltransferase F (488 aa).

Residues Ala135–Lys141, Glu159, Asp186, and Asp204 each bind S-adenosyl-L-methionine. The Nucleophile role is filled by Cys257.

Belongs to the class I-like SAM-binding methyltransferase superfamily. RsmB/NOP family.

It is found in the cytoplasm. The enzyme catalyses cytidine(1407) in 16S rRNA + S-adenosyl-L-methionine = 5-methylcytidine(1407) in 16S rRNA + S-adenosyl-L-homocysteine + H(+). Specifically methylates the cytosine at position 1407 (m5C1407) of 16S rRNA. In Shewanella pealeana (strain ATCC 700345 / ANG-SQ1), this protein is Ribosomal RNA small subunit methyltransferase F.